The following is a 240-amino-acid chain: Purine nucleoside phosphorylase DeoD-type (240 aa).

Position 5 (His-5) interacts with a purine D-ribonucleoside. Residues Gly-21, Arg-25, Arg-44, and 88–91 (RVGS) contribute to the phosphate site. Residues 180–182 (EME) and 204–205 (SD) contribute to the a purine D-ribonucleoside site. The Proton donor role is filled by Asp-205.

It belongs to the PNP/UDP phosphorylase family. As to quaternary structure, homohexamer; trimer of homodimers.

It carries out the reaction a purine D-ribonucleoside + phosphate = a purine nucleobase + alpha-D-ribose 1-phosphate. It catalyses the reaction a purine 2'-deoxy-D-ribonucleoside + phosphate = a purine nucleobase + 2-deoxy-alpha-D-ribose 1-phosphate. Catalyzes the reversible phosphorolytic breakdown of the N-glycosidic bond in the beta-(deoxy)ribonucleoside molecules, with the formation of the corresponding free purine bases and pentose-1-phosphate. The chain is Purine nucleoside phosphorylase DeoD-type from Actinobacillus pleuropneumoniae serotype 5b (strain L20).